A 501-amino-acid chain; its full sequence is Glutamate--tRNA ligase (501 aa).

Residues 11–21 (PSPTGPLHIGG) carry the 'HIGH' region motif. Residues 260–264 (KLSKR) carry the 'KMSKS' region motif. ATP is bound at residue Lys-263.

This sequence belongs to the class-I aminoacyl-tRNA synthetase family. Glutamate--tRNA ligase type 1 subfamily. In terms of assembly, monomer.

Its subcellular location is the cytoplasm. It catalyses the reaction tRNA(Glu) + L-glutamate + ATP = L-glutamyl-tRNA(Glu) + AMP + diphosphate. Its function is as follows. Catalyzes the attachment of glutamate to tRNA(Glu) in a two-step reaction: glutamate is first activated by ATP to form Glu-AMP and then transferred to the acceptor end of tRNA(Glu). This is Glutamate--tRNA ligase from Flavobacterium johnsoniae (strain ATCC 17061 / DSM 2064 / JCM 8514 / BCRC 14874 / CCUG 350202 / NBRC 14942 / NCIMB 11054 / UW101) (Cytophaga johnsonae).